A 122-amino-acid polypeptide reads, in one-letter code: Putative syntaxin 6 (122 aa).

The Cytoplasmic segment spans residues 1–100 (MSNYRYSKLN…AKLTHLEDES (100 aa)). A t-SNARE coiled-coil homology domain is found at 31-93 (EQIIQEQDDE…DTAMKKMAKL (63 aa)). A helical; Anchor for type IV membrane protein transmembrane segment spans residues 101 to 121 (SQCKMIMVLSALLFFLVFVLL). Valine 122 is a topological domain (extracellular).

The protein belongs to the syntaxin family.

Its subcellular location is the membrane. Its function is as follows. SNARE promoting movement of transport vesicles to target membranes. Potentially functions in retrograde trafficking and in the endocytic recycling pathway. This is Putative syntaxin 6 (syx-6) from Caenorhabditis elegans.